The sequence spans 548 residues: ETS domain-containing transcription factor ERF (548 aa).

A phosphothreonine mark is found at threonine 3 and threonine 7. Serine 20 and serine 24 each carry phosphoserine. The segment at residues 27–107 (IQLWHFILEL…KGKRFTYKFN (81 aa)) is a DNA-binding region (ETS). 3 disordered regions span residues 130–169 (QSAP…SSSS), 184–225 (GSVS…LARL), and 280–304 (SPTL…SHFS). Phosphoserine occurs at positions 185 and 190. Residues 289–301 (SGGGGPSGSGGGS) show a composition bias toward gly residues. Serine 327 is subject to Phosphoserine. Residues 342–478 (PQRPDKCPLP…GEAPGASQCM (137 aa)) form a disordered region. The segment covering 348–361 (CPLPPMAPETPPVP) has biased composition (pro residues). Low complexity-rich tracts occupy residues 362–373 (SSASSSSSSSSS) and 394–403 (KAVAGADKSG). Serine 431 and serine 435 each carry phosphoserine. Acidic residues predominate over residues 431–451 (SEGESEEVEVTDISDEDEEDG). The residue at position 441 (threonine 441) is a Phosphothreonine. Serine 444 carries the phosphoserine modification. Glycyl lysine isopeptide (Lys-Gly) (interchain with G-Cter in SUMO2) cross-links involve residues lysine 465, lysine 481, and lysine 512. The tract at residues 492 to 548 (CRLEGGGGPAGGFEDEGEDKKVRGEGPGEAGGPLTPRRVSSDLQHATAQLSLEHRDS) is disordered. Threonine 526 is subject to Phosphothreonine; by MAPK1. Phosphoserine occurs at positions 531, 532, and 548. The span at 532-541 (SDLQHATAQL) shows a compositional bias: polar residues.

Belongs to the ETS family. In terms of processing, phosphorylated by multiple kinases including MAPK1/ERK2 at THR-526. Phosphorylation regulates the activity of ERF. In terms of tissue distribution, highest levels in testis, ovary, pancreas, and heart.

Its subcellular location is the nucleus. In terms of biological role, potent transcriptional repressor that binds to the H1 element of the Ets2 promoter. May regulate other genes involved in cellular proliferation. Required for extraembryonic ectoderm differentiation, ectoplacental cone cavity closure, and chorioallantoic attachment. May be important for regulating trophoblast stem cell differentiation. This Homo sapiens (Human) protein is ETS domain-containing transcription factor ERF (ERF).